A 574-amino-acid polypeptide reads, in one-letter code: Developmental and secondary metabolism regulator veA (574 aa).

Disordered stretches follow at residues Met1 to Thr22, Glu39 to Pro60, Arg255 to Lys500, and Arg513 to Arg540. Residues Gly25–Arg230 enclose the Velvet domain. A Nuclear localization signal motif is present at residues Glu39 to Cys44. Pro residues-rich tracts occupy residues Arg314 to Ala323 and Pro330 to His341. Composition is skewed to polar residues over residues Pro343–Ser353, His385–Glu394, Arg406–Pro415, and Val448–Thr458. The tract at residues Gln457–Ala498 is PEST. Composition is skewed to low complexity over residues Pro459 to Ser474 and Ser482 to Ser493. Over residues Arg513–Pro525 the composition is skewed to basic and acidic residues.

It belongs to the velvet family. VeA subfamily. As to quaternary structure, component of the heterotrimeric velvet complex composed of laeA, veA and velB; VeA acting as a bridging protein between laeA and velB.

Its subcellular location is the nucleus. It is found in the cytoplasm. In terms of biological role, component of the velvet transcription factor complex that controls sexual/asexual developmental ratio in response to light, promoting sexual development in the darkness while stimulating asexual sporulation under illumination. The velvet complex hat acts as a global regulator for secondary metabolite gene expression. Controls the expression of the cyclopiazonic acid, aflatrem, and aflatoxin gene clusters. Controls the expression of the sclerotium-specific pigment asparasone A gene cluster. Controls the expression of the aflavarin gene cluster. also controls the production of hydrolases and other extracellular proteins during growth on natural starch-based substrates. Regulates genes involved in the High Osmolarity Glycerol (HOG) signaling pathway. Required for the conidial and sclerotial density-dependent production. In Aspergillus flavus (strain ATCC 200026 / FGSC A1120 / IAM 13836 / NRRL 3357 / JCM 12722 / SRRC 167), this protein is Developmental and secondary metabolism regulator veA.